Reading from the N-terminus, the 115-residue chain is Con-Ins T1A (115 aa).

The N-terminal stretch at 1-24 (MTTSFYFLLMALGLLLYVCQSSFG) is a signal peptide. A propeptide spanning residues 25 to 29 (NQHTR) is cleaved from the precursor. The residue at position 34 (P34) is a 4-hydroxyproline; partial. Intrachain disulfides connect C38–C101, C50–C114, and C100–C105. E41 carries the post-translational modification 4-carboxyglutamate. Residues 53-94 (KRNDAGKKRGRASPLWQRGGSLSMLKARAKRNEAFHLQRAHR) constitute a propeptide, c peptide. A 4-carboxyglutamate modification is found at E98. P104 bears the 4-hydroxyproline; partial mark. A 4-carboxyglutamate; partial modification is found at E109. The residue at position 114 (C114) is a Cysteine amide.

This sequence belongs to the insulin family. As to quaternary structure, heterodimer of A and B chains; disulfide-linked. As to expression, expressed by the venom gland.

It is found in the secreted. In terms of biological role, this venom insulin, from a fish-hunting cone snail, facilitates prey capture by rapidly inducing hypoglycemic shock. It is one of the smallest known insulin found in nature and lacks the C-terminal segment of the B chain that, in human insulin, mediates engagement of the insulin receptor (INSR) and assembly of the hormone's hexameric storage form. Despite lacking this segment, it both binds and activates human insulin receptor (long isoform (HIR-B)) with a high potency (EC(50)=12.0 nM). In vivo, intraperitoneal injection of this peptide into zebrafish lowers blood glucose with a lower potency than human insulin. In addition, when applied to water, this peptide reduces overall locomotor activity of zebrafish larvae, observed as a significant decrease in the percentage of time spent swimming and movement frequency. When tested on a mouse model of diabetes, this insulin also lowers blood glucose with a 10-fold lower potency than human insulin. The chain is Con-Ins T1A from Conus tulipa (Fish-hunting cone snail).